Consider the following 395-residue polypeptide: Zinc-regulated GTPase metalloprotein activator 1B (395 aa).

The segment at 1–36 is disordered; the sequence is MLPAVGSADEEEDPAEEDCPELVPMETTQSEEEEKS. Residues 8-20 show a composition bias toward acidic residues; the sequence is ADEEEDPAEEDCP. A psi-PxLVp motif motif is present at residues 17-24; that stretch reads EDCPELVP. Position 49–56 (49–56) interacts with GTP; sequence GYLGAGKT. Positions 107, 109, and 110 each coordinate Zn(2+). Residues 107–110 carry the CXCC motif motif; it reads CLCC. Residues 110 to 114 and 203 to 206 contribute to the GTP site; these read CSVKD and NKTD. In terms of domain architecture, CobW C-terminal spans 274 to 377; sequence IVTITFEVPG…ILKQLFIATV (104 aa).

It belongs to the SIMIBI class G3E GTPase family. ZNG1 subfamily.

It is found in the nucleus. It catalyses the reaction GTP + H2O = GDP + phosphate + H(+). In terms of biological role, zinc chaperone that directly transfers zinc cofactor to target metalloproteins, thereby activating them. Catalyzes zinc insertion into the active site of methionine aminopeptidase METAP1, which function to cleave the initiator methionine from polypeptides during or after protein translation. Mechanistically, the N-terminal psi-PxLVp motif binds to the C6H2-type zinc finger of inactive form of METAP1. After formation of the docked complex, zinc is transferred from the CXCC motif in the GTPase domain of ZNG1B to the zinc binding site in the peptidase domain of METAP1 in a process requiring GTP hydrolysis. GTP/GDP exchange is required for release of active METAP1. In Homo sapiens (Human), this protein is Zinc-regulated GTPase metalloprotein activator 1B.